The sequence spans 481 residues: UDP-glycosyltransferase 72E2 (481 aa).

Catalysis depends on H18, which acts as the Proton acceptor. Residue H18 coordinates an anthocyanidin. D111 serves as the catalytic Charge relay. Residues A346, Q348, H363, W366, S368, and E371 each contribute to the UDP-alpha-D-glucose site. Residue A386 coordinates an anthocyanidin. E387 and Q388 together coordinate UDP-alpha-D-glucose.

It belongs to the UDP-glycosyltransferase family. In terms of tissue distribution, expressed in seedlings and roots.

The catalysed reaction is (E)-4-coumarate + UDP-alpha-D-glucose = 4-O-(beta-D-glucosyl)-trans-4-coumarate + UDP + H(+). It catalyses the reaction (E)-coniferol + UDP-alpha-D-glucose = 4-O-(beta-D-glucosyl)-(E)-coniferol + UDP + H(+). The enzyme catalyses (E)-sinapyl alcohol + UDP-alpha-D-glucose = 4-O-(beta-D-glucosyl)-trans-4-sinapoyl alcohol + UDP + H(+). It carries out the reaction (E)-sinapate + UDP-alpha-D-glucose = 4-O-(beta-D-glucosyl)-trans-sinapate + UDP + H(+). The catalysed reaction is (E)-coniferaldehyde + UDP-alpha-D-glucose = 4-O-(beta-D-glucosyl)-4-(E)-coniferyl aldehyde + UDP + H(+). It catalyses the reaction (E)-sinapaldehyde + UDP-alpha-D-glucose = 4-O-(beta-D-glucosyl)-4-trans-sinapoyl aldehyde + UDP + H(+). Functionally, involved in the O-glucosylation of monolignols (alcohol monomers of lignin). Glucosylates coniferyl alcohol to form coniferyl alcohol 4-O-glucoside. Glucosylates sinapyl alcohol to form sinapyl alcohol 4-O-glucoside. Glucosylates coniferyl aldehyde to form coniferyl aldehyde 4-O-glucoside. Glucosylates sinapyl aldehyde to form sinapyl aldehyde 4-O-glucoside. Possesses low activity with sinapate and ferulate as substrates. This chain is UDP-glycosyltransferase 72E2, found in Arabidopsis thaliana (Mouse-ear cress).